The following is a 120-amino-acid chain: ATP-dependent Clp protease adapter protein ClpS (120 aa).

It belongs to the ClpS family. Binds to the N-terminal domain of the chaperone ClpA.

Involved in the modulation of the specificity of the ClpAP-mediated ATP-dependent protein degradation. The chain is ATP-dependent Clp protease adapter protein ClpS from Pseudomonas syringae pv. tomato (strain ATCC BAA-871 / DC3000).